The sequence spans 272 residues: Ethanolamine ammonia-lyase small subunit (272 aa).

Adenosylcob(III)alamin is bound by residues V161, E182, and C211.

It belongs to the EutC family. As to quaternary structure, the basic unit is a heterodimer which dimerizes to form tetramers. The heterotetramers trimerize; 6 large subunits form a core ring with 6 small subunits projecting outwards. Adenosylcob(III)alamin is required as a cofactor.

The protein resides in the bacterial microcompartment. The catalysed reaction is ethanolamine = acetaldehyde + NH4(+). Its pathway is amine and polyamine degradation; ethanolamine degradation. Functionally, catalyzes the deamination of various vicinal amino-alcohols to oxo compounds. Allows this organism to utilize ethanolamine as the sole source of nitrogen and carbon in the presence of external vitamin B12. The chain is Ethanolamine ammonia-lyase small subunit from Pseudomonas putida (strain W619).